The chain runs to 521 residues: Biotinidase (521 aa).

Positions 1-25 (MSGARTAHALVFLLGCSALALGVCS) are cleaved as a signal peptide. The CN hydrolase domain maps to 50-329 (NPLELSSRQQ…QGLVGTENTT (280 aa)). Catalysis depends on Glu-90, which acts as the Proton acceptor. 2 N-linked (GlcNAc...) asparagine glycosylation sites follow: Asn-128 and Asn-181. Lys-190 (proton donor) is an active-site residue. Cys-223 serves as the catalytic Nucleophile. The N-linked (GlcNAc...) asparagine glycan is linked to Asn-380.

Belongs to the carbon-nitrogen hydrolase superfamily. BTD/VNN family.

It localises to the secreted. The protein resides in the extracellular space. It carries out the reaction biocytin + H2O = biotin + L-lysine. It catalyses the reaction biotin amide + H2O = biotin + NH4(+). Catalytic release of biotin from biocytin, the product of biotin-dependent carboxylases degradation. This is Biotinidase from Rattus norvegicus (Rat).